The following is a 246-amino-acid chain: tRNA pseudouridine synthase A (246 aa).

The active-site Nucleophile is the D52. Y111 is a substrate binding site.

The protein belongs to the tRNA pseudouridine synthase TruA family. As to quaternary structure, homodimer.

The enzyme catalyses uridine(38/39/40) in tRNA = pseudouridine(38/39/40) in tRNA. Functionally, formation of pseudouridine at positions 38, 39 and 40 in the anticodon stem and loop of transfer RNAs. The sequence is that of tRNA pseudouridine synthase A from Parvibaculum lavamentivorans (strain DS-1 / DSM 13023 / NCIMB 13966).